The sequence spans 244 residues: Cyclin-Q (244 aa).

Belongs to the cyclin family. Cyclin-like FAM58 subfamily.

Functionally, may be an activating cyclin for the cyclin-associated kinase CDK10. The polypeptide is Cyclin-Q (ccnq) (Xenopus laevis (African clawed frog)).